Reading from the N-terminus, the 689-residue chain is Glycine--tRNA ligase beta subunit (689 aa).

It belongs to the class-II aminoacyl-tRNA synthetase family. Tetramer of two alpha and two beta subunits.

The protein localises to the cytoplasm. It catalyses the reaction tRNA(Gly) + glycine + ATP = glycyl-tRNA(Gly) + AMP + diphosphate. The chain is Glycine--tRNA ligase beta subunit from Dichelobacter nodosus (strain VCS1703A).